Consider the following 176-residue polypeptide: Sperm-egg fusion protein TMEM95 (176 aa).

An N-terminal signal peptide occupies residues 1–16 (MWVLALGGAFLAVAKA). 4 disulfides stabilise this stretch: Cys-17/Cys-119, Cys-20/Cys-122, Cys-106/Cys-129, and Cys-110/Cys-135. Over 17–146 (CIFCRLQDHA…PDSHDLWDAR (130 aa)) the chain is Extracellular. Asn-36 and Asn-118 each carry an N-linked (GlcNAc...) asparagine glycan. A helical membrane pass occupies residues 147–167 (ILLLCIFGIVLLSGVVSLQVE). Residues 168-176 (YLNLQAKDL) lie on the Cytoplasmic side of the membrane.

Belongs to the TMEM95 family. Does not interact with sperm-egg fusion proteins IZUMO1 or IZUMO1R/JUNO. N-glycosylated. In terms of tissue distribution, expressed exclusively in testis.

Its subcellular location is the cytoplasmic vesicle. It localises to the secretory vesicle. The protein resides in the acrosome membrane. In terms of biological role, sperm protein required for fusion of sperm with the egg membrane during fertilization. The protein is Sperm-egg fusion protein TMEM95 of Mus musculus (Mouse).